Consider the following 401-residue polypeptide: Probable tRNA sulfurtransferase (401 aa).

Residues 60–165 (EPIIEKLKTV…QDGTYVTCRD (106 aa)) enclose the THUMP domain. ATP contacts are provided by residues 183 to 184 (ML), 208 to 209 (HF), Arg-265, Gly-287, and Gln-296.

It belongs to the ThiI family.

It is found in the cytoplasm. The enzyme catalyses [ThiI sulfur-carrier protein]-S-sulfanyl-L-cysteine + a uridine in tRNA + 2 reduced [2Fe-2S]-[ferredoxin] + ATP + H(+) = [ThiI sulfur-carrier protein]-L-cysteine + a 4-thiouridine in tRNA + 2 oxidized [2Fe-2S]-[ferredoxin] + AMP + diphosphate. It carries out the reaction [ThiS sulfur-carrier protein]-C-terminal Gly-Gly-AMP + S-sulfanyl-L-cysteinyl-[cysteine desulfurase] + AH2 = [ThiS sulfur-carrier protein]-C-terminal-Gly-aminoethanethioate + L-cysteinyl-[cysteine desulfurase] + A + AMP + 2 H(+). The protein operates within cofactor biosynthesis; thiamine diphosphate biosynthesis. Catalyzes the ATP-dependent transfer of a sulfur to tRNA to produce 4-thiouridine in position 8 of tRNAs, which functions as a near-UV photosensor. Also catalyzes the transfer of sulfur to the sulfur carrier protein ThiS, forming ThiS-thiocarboxylate. This is a step in the synthesis of thiazole, in the thiamine biosynthesis pathway. The sulfur is donated as persulfide by IscS. The sequence is that of Probable tRNA sulfurtransferase from Geobacillus kaustophilus (strain HTA426).